Consider the following 482-residue polypeptide: Catalase (482 aa).

Residues His-53 and Asn-126 contribute to the active site. Residue Tyr-336 coordinates heme.

This sequence belongs to the catalase family. It depends on heme as a cofactor.

Its subcellular location is the periplasm. It catalyses the reaction 2 H2O2 = O2 + 2 H2O. Decomposes hydrogen peroxide into water and oxygen; serves to protect cells from the toxic effects of hydrogen peroxide. Could protect cells in nodules which have a high potential to produce hydrogen peroxide because of the strong reducing conditions required for nitrogen fixation and the action of several proteins. In Aliivibrio fischeri (strain ATCC 700601 / ES114) (Vibrio fischeri), this protein is Catalase (katA).